The primary structure comprises 215 residues: S-crystallin 4 (215 aa).

In terms of domain architecture, GST N-terminal spans 2 to 80; the sequence is PSYTLHYFNH…YLAREFGFHG (79 aa). A GST C-terminal domain is found at 82–215; sequence NNMDMARVDY…YLQKRSRTEF (134 aa).

Belongs to the GST superfamily. As to expression, lens.

Its function is as follows. S-crystallins are structural components of squids and octopi eye lens. Contains relatively little if any GST activity. The sequence is that of S-crystallin 4 from Enteroctopus dofleini (North Pacific giant octopus).